Consider the following 307-residue polypeptide: MPKKCRHLLQTSDLSLDEIKLLLKKASVYANDFNAVSLETKEKMQNKIIVALFFENSTRTVSSFEIASLRLGAKIVKLNMQTSSASKGETLTDTFKNIYAMQPDAIITRHAFSSAPFKLAEFSQCPLINAGSGVSAHPTQALLDLLTLYQHFGSLENLKGKKIAFIGDVKNSRVANSNIKLLQRLGLEIMLCAPSSMLPSVSLKTTHNIEEAIEFADILMSLRTQTERHNAPIFASLKDYGNAYCITQKRLEAHAKNKEIIILHPGPVHRDIDIESAVLEDKRSKVLEQVKNGVAMRMAVLEFLLLD.

Residues Arg-59 and Thr-60 each contribute to the carbamoyl phosphate site. Lys-87 provides a ligand contact to L-aspartate. The carbamoyl phosphate site is built by Arg-109, His-137, and Gln-140. L-aspartate is bound by residues Arg-173 and Arg-223. The carbamoyl phosphate site is built by Gly-266 and Pro-267.

This sequence belongs to the aspartate/ornithine carbamoyltransferase superfamily. ATCase family. In terms of assembly, heterododecamer (2C3:3R2) of six catalytic PyrB chains organized as two trimers (C3), and six regulatory PyrI chains organized as three dimers (R2).

It carries out the reaction carbamoyl phosphate + L-aspartate = N-carbamoyl-L-aspartate + phosphate + H(+). Its pathway is pyrimidine metabolism; UMP biosynthesis via de novo pathway; (S)-dihydroorotate from bicarbonate: step 2/3. Functionally, catalyzes the condensation of carbamoyl phosphate and aspartate to form carbamoyl aspartate and inorganic phosphate, the committed step in the de novo pyrimidine nucleotide biosynthesis pathway. The chain is Aspartate carbamoyltransferase catalytic subunit from Helicobacter pylori (strain Shi470).